The primary structure comprises 97 residues: DNA-directed RNA polymerase subunit omega (97 aa).

This sequence belongs to the RNA polymerase subunit omega family. The RNAP catalytic core consists of 2 alpha, 1 beta, 1 beta' and 1 omega subunit. When a sigma factor is associated with the core the holoenzyme is formed, which can initiate transcription.

It carries out the reaction RNA(n) + a ribonucleoside 5'-triphosphate = RNA(n+1) + diphosphate. Functionally, promotes RNA polymerase assembly. Latches the N- and C-terminal regions of the beta' subunit thereby facilitating its interaction with the beta and alpha subunits. The sequence is that of DNA-directed RNA polymerase subunit omega from Coxiella burnetii (strain Dugway 5J108-111).